The primary structure comprises 136 residues: ATP synthase epsilon chain (136 aa).

The protein belongs to the ATPase epsilon chain family. As to quaternary structure, F-type ATPases have 2 components, CF(1) - the catalytic core - and CF(0) - the membrane proton channel. CF(1) has five subunits: alpha(3), beta(3), gamma(1), delta(1), epsilon(1). CF(0) has three main subunits: a, b and c.

Its subcellular location is the cell membrane. Produces ATP from ADP in the presence of a proton gradient across the membrane. The protein is ATP synthase epsilon chain of Ureaplasma urealyticum serovar 10 (strain ATCC 33699 / Western).